A 519-amino-acid polypeptide reads, in one-letter code: MFSNYLLSFSYRLNWDFIKWNLVDNIISLFHHEIHILSKNLNFRSIKKKQHLLFKSFYTRFVSVRDSVDNNFFFKSNIISSKEKFFIVFFLCYKRNFFYNLFFYNIEIINLSFKFNFFLFYKFCFNNLVKFVMYPFLELKTENFVFNFNFYTNLYDIFLNFKKILLKNFMKLYYFTINFNNKFNYMNKKWLYKNLTFNINFLKYFLKLNNFIFNGSILFFIFNFMFNGLKSFIQRKCFMNNEFIYVSSLKNIYFFFKSYNEFNICINYLIYFLKYKGINFNFINDHVKNFLTNGLTFNFIKFFNFGYKFLFKLNEKDINYYKFNIKTLIKNFYIKNIFYTICLINNKIKNWLDKYFLFVNKKYLFLELDIFISKLLWIKIKKYHPKKSNIWIYSKYWKNFSGIWKFFIINNISGKMIFLKYHYDFNNYLLYLKSNYSGTFSYLYTFNLYNSNKKKNFLFEKFKYKFFPKFLDLYITQKGQCYICKKHIYSKKFKIIKLKFDNNKFSKNIYLLHFYCNFI.

It belongs to the roaA family.

The protein resides in the plastid. The polypeptide is Ribosomal operon-associated A protein (roaA) (Euglena longa (Euglenophycean alga)).